Consider the following 320-residue polypeptide: TATA box-binding protein-like 2 (320 aa).

It belongs to the TBP family. As to expression, expression is restricted to the gonads, and is higher in the ovary than the testis.

It localises to the nucleus. Its function is as follows. TATA box-binding transcription factor. Members of the TBP family are differentially required to regulate transcription and development during early embryogenesis. Required for gastrulation. Regulates a large subset of genes that are ventrally expressed. Binds to a subset of promoters. The chain is TATA box-binding protein-like 2 from Xenopus laevis (African clawed frog).